Consider the following 765-residue polypeptide: Putative maltooligosyl trehalose synthase (765 aa).

It belongs to the glycosyl hydrolase 13 family. As to quaternary structure, monomer.

It carries out the reaction 4-[(1-&gt;4)-alpha-D-glucosyl](n-1)-D-glucose = 1-[(1-&gt;4)-alpha-D-glucosyl](n-1)-alpha-D-glucose. Catalyzes the conversion of maltooligosaccharide into the non-reducing saccharide, maltooligosyl trehalose (alpha-maltooligosyl alpha-D-glucoside) by intramolecular transglycosylation. In Mycobacterium tuberculosis (strain CDC 1551 / Oshkosh), this protein is Putative maltooligosyl trehalose synthase (treY).